A 570-amino-acid chain; its full sequence is Serine/threonine-protein kinase STY17 (570 aa).

The tract at residues 112-145 (LNGNSGDVDPSDPAVNEDAQSSYNSRSLAPPTFG) is disordered. A compositionally biased stretch (polar residues) spans 129–145 (DAQSSYNSRSLAPPTFG). The region spanning 180–260 (EITFSTIDRP…PCSKQKSITF (81 aa)) is the ACT domain. The Protein kinase domain occupies 292–545 (LKIEKKVACG…EIIEMLNQLI (254 aa)). Residues 298–306 (VACGSYGEL) and Lys319 each bind ATP. Asp413 functions as the Proton acceptor in the catalytic mechanism. A Phosphoserine modification is found at Ser441. A Phosphothreonine modification is found at Thr445.

Belongs to the protein kinase superfamily. Ser/Thr protein kinase family. Autophosphorylated on serine and threonine residues. Autophosphorylated at Thr-445.

The protein resides in the cytoplasm. It localises to the cytosol. The enzyme catalyses L-seryl-[protein] + ATP = O-phospho-L-seryl-[protein] + ADP + H(+). The catalysed reaction is L-threonyl-[protein] + ATP = O-phospho-L-threonyl-[protein] + ADP + H(+). Its activity is regulated as follows. Activated by autophosphorylation at Thr-445. Its function is as follows. Serine/threonine protein kinase that specifically phosphorylates chloroplast precursor proteins in the cytosol within the cleavable presequences (transit peptides). May be part of a cytosolic regulatory network involved in chloroplast protein import. Does not phosphorylate mitochondrion precursor proteins. Specific for ATP and does not utilize other NTPs. Plays a role in chloroplast biogenesis and differentiation in cotyledons, possibly through phosphorylation of chloroplast preproteins. This is Serine/threonine-protein kinase STY17 from Arabidopsis thaliana (Mouse-ear cress).